Consider the following 670-residue polypeptide: Transketolase, chromosomal (670 aa).

A substrate-binding site is contributed by His32. Thiamine diphosphate contacts are provided by residues His72 and 120-122 (GPL). Asp161 is a Mg(2+) binding site. Thiamine diphosphate contacts are provided by Gly162 and Asn191. Asn191 and Ile193 together coordinate Mg(2+). Residues His267, Arg364, and Ser391 each coordinate substrate. Thiamine diphosphate is bound at residue His267. Glu417 acts as the Proton donor in catalysis. Phe443 is a thiamine diphosphate binding site. Substrate is bound by residues His467, Asp475, and Arg526.

Belongs to the transketolase family. In terms of assembly, homodimer. It depends on Mg(2+) as a cofactor. Ca(2+) serves as cofactor. Mn(2+) is required as a cofactor. The cofactor is Co(2+). Requires thiamine diphosphate as cofactor.

The enzyme catalyses D-sedoheptulose 7-phosphate + D-glyceraldehyde 3-phosphate = aldehydo-D-ribose 5-phosphate + D-xylulose 5-phosphate. Its pathway is carbohydrate biosynthesis; Calvin cycle. Catalyzes the transfer of a two-carbon ketol group from a ketose donor to an aldose acceptor, via a covalent intermediate with the cofactor thiamine pyrophosphate. The sequence is that of Transketolase, chromosomal (cbbTC) from Cupriavidus necator (strain ATCC 17699 / DSM 428 / KCTC 22496 / NCIMB 10442 / H16 / Stanier 337) (Ralstonia eutropha).